The chain runs to 153 residues: Insulin-like growth factor 1 (153 aa).

Residues 49–77 (GPETLCGAELVDALQFVCGDRGFYFNKPT) form a b region. 3 disulfide bridges follow: Cys54–Cys96, Cys66–Cys109, and Cys95–Cys100. Residues 78-89 (GYGSSSRRAPQT) form a c region. The a stretch occupies residues 90 to 110 (GIVDECCFRSCDLRRLEMYCA). Residues 111–118 (PLKPAKSA) form a d region. A propeptide spans 119–153 (RSVRAQRHTDMPKAQKEVHLKNASRGSAGNKNYRM) (e peptide). The interval 120–153 (SVRAQRHTDMPKAQKEVHLKNASRGSAGNKNYRM) is disordered. Over residues 125–138 (RHTDMPKAQKEVHL) the composition is skewed to basic and acidic residues. The segment covering 142–153 (SRGSAGNKNYRM) has biased composition (polar residues).

This sequence belongs to the insulin family. Forms a ternary complex with IGFR1 and ITGAV:ITGB3. Forms a ternary complex with IGFR1 and ITGA6:ITGB4. Forms a ternary complex with IGFBP3 and ALS.

Its subcellular location is the secreted. In terms of biological role, the insulin-like growth factors, isolated from plasma, are structurally and functionally related to insulin but have a much higher growth-promoting activity. May be a physiological regulator of [1-14C]-2-deoxy-D-glucose (2DG) transport and glycogen synthesis in osteoblasts. Stimulates glucose transport in bone-derived osteoblastic (PyMS) cells and is effective at much lower concentrations than insulin, not only regarding glycogen and DNA synthesis but also with regard to enhancing glucose uptake. May play a role in synapse maturation. Ca(2+)-dependent exocytosis of IGF1 is required for sensory perception of smell in the olfactory bulb. Acts as a ligand for IGF1R. Binds to the alpha subunit of IGF1R, leading to the activation of the intrinsic tyrosine kinase activity which autophosphorylates tyrosine residues in the beta subunit thus initiating a cascade of down-stream signaling events leading to activation of the PI3K-AKT/PKB and the Ras-MAPK pathways. Binds to integrins ITGAV:ITGB3 and ITGA6:ITGB4. Its binding to integrins and subsequent ternary complex formation with integrins and IGFR1 are essential for IGF1 signaling. Induces the phosphorylation and activation of IGFR1, MAPK3/ERK1, MAPK1/ERK2 and AKT1. As part of the MAPK/ERK signaling pathway, acts as a negative regulator of apoptosis in cardiomyocytes via promotion of STUB1/CHIP-mediated ubiquitination and degradation of ICER-type isoforms of CREM. The chain is Insulin-like growth factor 1 from Panthera tigris altaica (Siberian tiger).